Here is a 399-residue protein sequence, read N- to C-terminus: MAKEKYDRSKPHVNIGTIGHVDHGKTTLTAAITTVLARRLPSSVNQPKDYASIDAAPEERERAGITINTAHVEYETATRHYAHIDAPGHADYVKNMITGAAQMDGAILVVASTDGPMPQTREHILLSRQVGVKHLIVFMNKVDLVDDEELLELVEMEIRDLLSEYDFPGDDLPVIQGSALKALEGDTKFEDIIMELMDTVDSYIPEPERDTDKPLLLPVEDVFSITGRGTVASGRIDRGTVRVNDEIEIVGIKEETKKAVVTGVEMFRKQLDEGLAGDNVGILLRGVQRDEIERGQVIAKPGSINPHTKFKGEVYILSKDEGGRHTPFFNNYRPQFYFRTTDVTGSIELPAGTEMVMPGDNVTINVELIHPIAVEQGTTFSIREGGRTVGSGIVSEIEA.

The region spanning 10–208 (KPHVNIGTIG…TVDSYIPEPE (199 aa)) is the tr-type G domain. Residues 19 to 26 (GHVDHGKT) are G1. Residue 19–26 (GHVDHGKT) participates in GTP binding. Thr26 provides a ligand contact to Mg(2+). A G2 region spans residues 64–68 (GITIN). The tract at residues 85-88 (DAPG) is G3. GTP contacts are provided by residues 85–89 (DAPGH) and 140–143 (NKVD). Residues 140–143 (NKVD) form a G4 region. A G5 region spans residues 178-180 (SAL).

The protein belongs to the TRAFAC class translation factor GTPase superfamily. Classic translation factor GTPase family. EF-Tu/EF-1A subfamily. In terms of assembly, monomer.

It localises to the cytoplasm. It catalyses the reaction GTP + H2O = GDP + phosphate + H(+). GTP hydrolase that promotes the GTP-dependent binding of aminoacyl-tRNA to the A-site of ribosomes during protein biosynthesis. This Streptococcus pyogenes serotype M12 (strain MGAS2096) protein is Elongation factor Tu.